Reading from the N-terminus, the 317-residue chain is Protoheme IX farnesyltransferase (317 aa).

The next 9 membrane-spanning stretches (helical) occupy residues valine 39–leucine 58, leucine 62–tyrosine 84, isoleucine 100–glycine 120, leucine 123–phenylalanine 143, isoleucine 160–glycine 180, leucine 184–leucine 204, isoleucine 233–threonine 253, valine 256–leucine 276, and alanine 293–valine 313.

It belongs to the UbiA prenyltransferase family. Protoheme IX farnesyltransferase subfamily.

Its subcellular location is the cell inner membrane. The enzyme catalyses heme b + (2E,6E)-farnesyl diphosphate + H2O = Fe(II)-heme o + diphosphate. It functions in the pathway porphyrin-containing compound metabolism; heme O biosynthesis; heme O from protoheme: step 1/1. Converts heme B (protoheme IX) to heme O by substitution of the vinyl group on carbon 2 of heme B porphyrin ring with a hydroxyethyl farnesyl side group. This chain is Protoheme IX farnesyltransferase, found in Granulibacter bethesdensis (strain ATCC BAA-1260 / CGDNIH1).